The primary structure comprises 523 residues: Amino acid transporter protein 6 (523 aa).

Topologically, residues 1–19 (MLNVFGVSASMPDDSRSQK) are cytoplasmic. Residues 20-40 (MGLLGAISYIVGNIVGSGIFI) form a helical membrane-spanning segment. Over 41 to 51 (TPTSIIENVNS) the chain is Extracellular. The helical transmembrane segment at 52 to 72 (VGLSLAIWILAAFISMLGSFC) threads the bilayer. Topologically, residues 73–86 (YVELGTSIRLSGGD) are cytoplasmic. The helical transmembrane segment at 87 to 107 (FAYLCFMKWYPVAFAFMCIGC) threads the bilayer. The Extracellular portion of the chain corresponds to 108-145 (TINYPATLAVQAQTFAEYVFRGAGVELDETSEFWAKKL). A helical transmembrane segment spans residues 146-166 (LGFSLIILLMFMNFFSLKTFV). Residues 167–173 (QRFSILA) lie on the Cytoplasmic side of the membrane. A helical transmembrane segment spans residues 174–194 (SLAKIAATLLIIITGFYYLIF). Over 195–214 (KHWKQNLEEPFKGSNWNPGP) the chain is Extracellular. A helical membrane pass occupies residues 215–235 (FVNALFAGLFSYDGWDILNFG). The Cytoplasmic segment spans residues 236–249 (AEEIENPKRTMPLS). The chain crosses the membrane as a helical span at residues 250–270 (IIIGMTCIGVIYVAVNVAYSI). Residues 271–290 (VLSPTEMIASNAVAIDFANK) lie on the Extracellular side of the membrane. Asn-289 carries N-linked (GlcNAc...) asparagine glycosylation. Residues 291-311 (TLGAAAFVVPVMVAILLIGSL) form a helical membrane-spanning segment. Topologically, residues 312–348 (NSTMFSASRYLQAVSRQGHIPSAISGIAPNCDSPRVA) are cytoplasmic. The chain crosses the membrane as a helical span at residues 349–369 (LLVHILIAIAVSFLGDPDKLI). Residues 370–404 (NYVAFAQWSQRAFTMSALLYLRIRGRPRHPDRIQL) are Extracellular-facing. The chain crosses the membrane as a helical span at residues 405 to 425 (PIIMPILFFLVCTSMVVISII). Residues 426 to 429 (DDFK) are Cytoplasmic-facing. A helical membrane pass occupies residues 430 to 450 (SSAVGLGILLGGLIIFIIFVW). The Extracellular portion of the chain corresponds to 451–523 (DRALPSSHTF…GNGQFKCTRM (73 aa)). Asn-462 is a glycosylation site (N-linked (GlcNAc...) asparagine). The PDZ-binding motif signature appears at 521–523 (TRM).

It belongs to the amino acid-polyamine-organocation (APC) superfamily. As to quaternary structure, interacts (via PDZ-binding motif) with nfrl-1 (via PDZ 2 domain); the interaction with nrfl-1 is required to sequester aat-6 to the apical cell membrane of intestinal cells. As to expression, expressed at the apical cell membrane of intestinal cells.

It localises to the apical cell membrane. Functionally, amino acid transporter that mediates the uptake of the L-enantiomers of various amino acids, including L-glutamate. May play a role in promoting fertility. The protein is Amino acid transporter protein 6 of Caenorhabditis elegans.